We begin with the raw amino-acid sequence, 113 residues long: N-alpha-acetyltransferase 38, NatC auxiliary subunit (113 aa).

The disordered stretch occupies residues 1–29 (MAAVLEENGCSRQSSPGAGDSDAEAGDTA). Residues 28–106 (TARHKLESLL…IVSIQVELES (79 aa)) enclose the Sm domain.

The protein belongs to the snRNP Sm proteins family. In terms of assembly, component of the N-terminal acetyltransferase C (NatC) complex.

The protein resides in the cytoplasm. It is found in the nucleus. In terms of biological role, auxillary component of the N-terminal acetyltransferase C (NatC) complex which catalyzes acetylation of N-terminal methionine residues. N-terminal acetylation protects proteins from ubiquitination and degradation by the N-end rule pathway. This Xenopus tropicalis (Western clawed frog) protein is N-alpha-acetyltransferase 38, NatC auxiliary subunit (naa38).